The sequence spans 342 residues: MNMSTNYSTTNQSYKHLSEAERGEIEAYLSVGLKPAEIARRLGRNRSTITREINRGSITQVKKVNGAKGLLPTLLCRCCSITVIRHAREASYYLKLDSVSDDFMRAFTDAMREKPRVHSVDTFVHTYRLQHVDAVVPSTKTLYNYIHQGLLEIKVIDLPRRVRIRKKFTKRPSTKKHLGKSIEERPEEINNRSRFGDWEIDSVLGGKTIGEPSILTLVERQTRYAVTKKLVEKKAEYVNQAVLECMKLYPIKSITADNGNEFSSLSKIEGLDVYFAHAYSSYERGTNENFNGLLREFIPKGCSLKELNQNLLEDYTKAINERPRRIHGYQSAKKLFELTQTA.

An Integrase catalytic domain is found at 182 to 342 (IEERPEEINN…KKLFELTQTA (161 aa)).

This sequence belongs to the transposase IS30 family.

Required for the transposition of the insertion element. In Streptococcus salivarius, this protein is Probable transposase for insertion-like sequence element IS1161.